The sequence spans 121 residues: Phospholipase A2 homolog ECO_00035 (121 aa).

7 cysteine pairs are disulfide-bonded: Cys25-Cys114, Cys27-Cys43, Cys42-Cys94, Cys48-Cys121, Cys49-Cys87, Cys56-Cys80, and Cys74-Cys85. Residues 104-116 (KKYKIYPNILCRG) form an important for membrane-damaging activities in eukaryotes and bacteria; heparin-binding region.

Belongs to the phospholipase A2 family. Group II subfamily. S49 sub-subfamily. Monomer. As to expression, expressed by the venom gland.

Its subcellular location is the secreted. Snake venom phospholipase A2 homolog that lacks enzymatic activity. Shows high myotoxin activities and displays edema-inducing activities. Has cytotoxic activities against HUVEC cells (LC(50)=4.9 uL) and human lung adenocarcinoma A549 cells (LC(50)=3.5 uL). In Echis coloratus (Carpet viper), this protein is Phospholipase A2 homolog ECO_00035.